A 283-amino-acid chain; its full sequence is Bis(5'-nucleosyl)-tetraphosphatase, symmetrical (283 aa).

The protein belongs to the Ap4A hydrolase family.

The enzyme catalyses P(1),P(4)-bis(5'-adenosyl) tetraphosphate + H2O = 2 ADP + 2 H(+). Hydrolyzes diadenosine 5',5'''-P1,P4-tetraphosphate to yield ADP. The sequence is that of Bis(5'-nucleosyl)-tetraphosphatase, symmetrical from Pseudomonas paraeruginosa (strain DSM 24068 / PA7) (Pseudomonas aeruginosa (strain PA7)).